The primary structure comprises 205 residues: Protein MIS12 homolog (205 aa).

The stretch at 108–205 (PYSEEDFQHL…EKESKRLKIS (98 aa)) forms a coiled coil.

The protein belongs to the mis12 family. In terms of assembly, component of the MIS12 complex composed of MIS12, DSN1, NSL1 and PMF1. Also interacts with KNL1, CBX3, CBX5, NDC80 and ZWINT.

It localises to the chromosome. The protein resides in the centromere. The protein localises to the kinetochore. Its function is as follows. Part of the MIS12 complex which is required for normal chromosome alignment and segregation and for kinetochore formation during mitosis. Essential for proper kinetochore microtubule attachments. The polypeptide is Protein MIS12 homolog (Homo sapiens (Human)).